The following is a 289-amino-acid chain: Cyclo(L-tyrosyl-L-tyrosyl) synthase (289 aa).

A disordered region spans residues 1 to 48 (MSYVAAEPGVLISPTDDLQSPRSAPAAHDENADGITGGTRDDSAPNSR). S88 serves as the catalytic Nucleophile. Residues N91, 229-233 (YICAE), and Y253 each bind substrate.

This sequence belongs to the CDPS family. In terms of assembly, homodimer.

It carries out the reaction 2 L-tyrosyl-tRNA(Tyr) = cyclo(L-tyrosyl-L-tyrosyl) + 2 tRNA(Tyr). Involved in the biosynthesis of mycocyclosin. It uses activated amino acids in the form of aminoacyl-tRNAs (aa-tRNAs) as substrates to catalyze the ATP-independent formation of cyclodipeptides which are intermediates in diketopiperazine (DKP) biosynthetic pathways. Catalyzes the formation of cyclo(L-Tyr-L-Tyr) (cYY) from L-tyrosyl-tRNA(Tyr). In Mycobacterium tuberculosis (strain CDC 1551 / Oshkosh), this protein is Cyclo(L-tyrosyl-L-tyrosyl) synthase.